Reading from the N-terminus, the 593-residue chain is Arginine--tRNA ligase (593 aa).

Positions 123 to 133 (PNVAKPMHVGH) match the 'HIGH' region motif.

This sequence belongs to the class-I aminoacyl-tRNA synthetase family. In terms of assembly, monomer.

It localises to the cytoplasm. It catalyses the reaction tRNA(Arg) + L-arginine + ATP = L-arginyl-tRNA(Arg) + AMP + diphosphate. This Phenylobacterium zucineum (strain HLK1) protein is Arginine--tRNA ligase.